Here is a 199-residue protein sequence, read N- to C-terminus: Acireductone dioxygenase 2 (199 aa).

The Fe(2+) site is built by His98, His100, Glu104, and His143. Residues His98, His100, Glu104, and His143 each contribute to the Ni(2+) site.

Belongs to the acireductone dioxygenase (ARD) family. Requires Fe(2+) as cofactor. Ni(2+) is required as a cofactor.

The protein resides in the cytoplasm. It is found in the nucleus. It carries out the reaction 1,2-dihydroxy-5-(methylsulfanyl)pent-1-en-3-one + O2 = 4-methylsulfanyl-2-oxobutanoate + formate + 2 H(+). The catalysed reaction is 1,2-dihydroxy-5-(methylsulfanyl)pent-1-en-3-one + O2 = 3-(methylsulfanyl)propanoate + CO + formate + 2 H(+). It functions in the pathway amino-acid biosynthesis; L-methionine biosynthesis via salvage pathway; L-methionine from S-methyl-5-thio-alpha-D-ribose 1-phosphate: step 5/6. In terms of biological role, catalyzes 2 different reactions between oxygen and the acireductone 1,2-dihydroxy-3-keto-5-methylthiopentene (DHK-MTPene) depending upon the metal bound in the active site. Fe-containing acireductone dioxygenase (Fe-ARD) produces formate and 2-keto-4-methylthiobutyrate (KMTB), the alpha-ketoacid precursor of methionine in the methionine recycle pathway. Ni-containing acireductone dioxygenase (Ni-ARD) produces methylthiopropionate, carbon monoxide and formate, and does not lie on the methionine recycle pathway. This chain is Acireductone dioxygenase 2, found in Vitis vinifera (Grape).